A 651-amino-acid chain; its full sequence is Acetyl-coenzyme A synthetase (651 aa).

CoA is bound by residues 189-192 (RGGK), threonine 311, and asparagine 335. ATP is bound by residues 387 to 389 (GEP), 411 to 416 (DTWWQT), aspartate 500, and arginine 515. CoA is bound at residue serine 523. Arginine 526 is an ATP binding site. Mg(2+) contacts are provided by valine 537, histidine 539, and valine 542. Arginine 586 is a CoA binding site. The residue at position 611 (lysine 611) is an N6-acetyllysine.

Belongs to the ATP-dependent AMP-binding enzyme family. Mg(2+) is required as a cofactor. Post-translationally, acetylated. Deacetylation by the SIR2-homolog deacetylase activates the enzyme.

The catalysed reaction is acetate + ATP + CoA = acetyl-CoA + AMP + diphosphate. In terms of biological role, catalyzes the conversion of acetate into acetyl-CoA (AcCoA), an essential intermediate at the junction of anabolic and catabolic pathways. AcsA undergoes a two-step reaction. In the first half reaction, AcsA combines acetate with ATP to form acetyl-adenylate (AcAMP) intermediate. In the second half reaction, it can then transfer the acetyl group from AcAMP to the sulfhydryl group of CoA, forming the product AcCoA. The polypeptide is Acetyl-coenzyme A synthetase (Brucella abortus (strain S19)).